We begin with the raw amino-acid sequence, 547 residues long: RNA polymerase sigma factor sigF, chloroplastic (547 aa).

A compositionally biased stretch (polar residues) spans 1 to 17 (MEATRNLVSSSPSFQTK). Disordered stretches follow at residues 1 to 28 (MEAT…SSPS) and 54 to 79 (FPAS…DDRT). A chloroplast-targeting transit peptide spans 1 to 55 (MEATRNLVSSSPSFQTKTHLKSSYSSPSSVVMLHDQTTTPVVNSRHLNSLSRHFP). Residues 62–79 (EPREESRPLSHALRDDRT) show a composition bias toward basic and acidic residues. A phosphoserine; by CK2 mark is found at Ser-94, Ser-95, Ser-174, Ser-176, Ser-177, and Ser-180. Residues 163–226 (ANPSDNIKDS…QKTSAKKKYK (64 aa)) are disordered. Low complexity predominate over residues 172–181 (SLSTSSSMSL). A Phosphothreonine; by CK2 modification is found at Thr-249. Positions 335–348 (DLLQEGSMGLMKSV) match the Polymerase core binding motif. The segment at residues 505-524 (LSEIGEIYGLSKERVRQLES) is a DNA-binding region (H-T-H motif).

This sequence belongs to the sigma-70 factor family. Interacts (via N-terminus) with DG1 (via C-terminus). In terms of processing, phosphorylated to acquire sigma activity; site-specific phosphorylation regulates promoter affinity. Phosphorylation at Ser-174 by chloroplastic CK2 requires prior phosphorylation at Ser-177. Phosphorylation at either Ser-94, Ser-95 or Ser-174 is required for sigma activation. As to expression, expressed in seedling, accumulating progressively. Present in leaves but not in roots.

It is found in the plastid. Its subcellular location is the chloroplast. Sigma factors are initiation factors that promote the attachment of plastid-encoded RNA polymerase (PEP) to specific initiation sites and are then released. Regulates transcription in chloroplast in a DG1-dependent manner. Involved in light-dependent chloroplast development. Required during early plant development and primary leaf formation. This chain is RNA polymerase sigma factor sigF, chloroplastic (SIGF), found in Arabidopsis thaliana (Mouse-ear cress).